A 637-amino-acid chain; its full sequence is 1-deoxy-D-xylulose-5-phosphate synthase (637 aa).

Residues H74 and 115 to 117 contribute to the thiamine diphosphate site; that span reads GHS. D146 contacts Mg(2+). Residues 147-148, N175, Y285, and E366 contribute to the thiamine diphosphate site; that span reads GA. Residue N175 participates in Mg(2+) binding.

This sequence belongs to the transketolase family. DXPS subfamily. In terms of assembly, homodimer. The cofactor is Mg(2+). Requires thiamine diphosphate as cofactor.

It carries out the reaction D-glyceraldehyde 3-phosphate + pyruvate + H(+) = 1-deoxy-D-xylulose 5-phosphate + CO2. It functions in the pathway metabolic intermediate biosynthesis; 1-deoxy-D-xylulose 5-phosphate biosynthesis; 1-deoxy-D-xylulose 5-phosphate from D-glyceraldehyde 3-phosphate and pyruvate: step 1/1. In terms of biological role, catalyzes the acyloin condensation reaction between C atoms 2 and 3 of pyruvate and glyceraldehyde 3-phosphate to yield 1-deoxy-D-xylulose-5-phosphate (DXP). This is 1-deoxy-D-xylulose-5-phosphate synthase from Pelotomaculum thermopropionicum (strain DSM 13744 / JCM 10971 / SI).